Here is a 414-residue protein sequence, read N- to C-terminus: Enolase (414 aa).

Gln-162 contributes to the (2R)-2-phosphoglycerate binding site. Catalysis depends on Glu-204, which acts as the Proton donor. Residues Asp-239, Glu-280, and Asp-307 each contribute to the Mg(2+) site. (2R)-2-phosphoglycerate-binding residues include Lys-332, Arg-361, Ser-362, and Lys-383. Lys-332 acts as the Proton acceptor in catalysis.

The protein belongs to the enolase family. The cofactor is Mg(2+).

The protein localises to the cytoplasm. It is found in the secreted. Its subcellular location is the cell surface. It catalyses the reaction (2R)-2-phosphoglycerate = phosphoenolpyruvate + H2O. It participates in carbohydrate degradation; glycolysis; pyruvate from D-glyceraldehyde 3-phosphate: step 4/5. Functionally, catalyzes the reversible conversion of 2-phosphoglycerate (2-PG) into phosphoenolpyruvate (PEP). It is essential for the degradation of carbohydrates via glycolysis. The protein is Enolase of Campylobacter jejuni (strain RM1221).